The primary structure comprises 209 residues: MDGVTVIEHPLVRHKLTIMRKKETSTAGFRRLLREISTLLCYEVTRDLEMTMETIDTPLETIQAPVLEGKKLVFASILRAGNGLLEGMLELVPSARVAHVGVYRDHDTLEAVEYYFKAPESLDARLVIVVDPMLATGNSSIAAVEKLKERGAKNIRFLCLLAAPEGIKNFREAHPDVPIYTAAIDRHLNEKGYIVPGLGDAGDRMYGTK.

Residues Arg79, Arg104, and 131-139 (DPMLATGNS) each bind 5-phospho-alpha-D-ribose 1-diphosphate. Residues Ile194 and 199–201 (GDA) each bind uracil. Residue Asp200 participates in 5-phospho-alpha-D-ribose 1-diphosphate binding.

The protein belongs to the UPRTase family. The cofactor is Mg(2+).

The catalysed reaction is UMP + diphosphate = 5-phospho-alpha-D-ribose 1-diphosphate + uracil. It participates in pyrimidine metabolism; UMP biosynthesis via salvage pathway; UMP from uracil: step 1/1. With respect to regulation, allosterically activated by GTP. Its function is as follows. Catalyzes the conversion of uracil and 5-phospho-alpha-D-ribose 1-diphosphate (PRPP) to UMP and diphosphate. In Agrobacterium fabrum (strain C58 / ATCC 33970) (Agrobacterium tumefaciens (strain C58)), this protein is Uracil phosphoribosyltransferase.